The chain runs to 2604 residues: Probable polyketide synthase 17 (2604 aa).

The 423-residue stretch at 11–433 (NDDIAIIGMG…GSNCHMILSE (423 aa)) folds into the Ketosynthase family 3 (KS3) domain. Catalysis depends on for beta-ketoacyl synthase activity residues C179, H316, and H356. An acyl/malonyl transferases region spans residues 631–664 (GISPSIVVGHSFGEIPSALFSDVISLETAVKIVY). The For acyl/malonyl transferase activity role is filled by S641. The tract at residues 937–1057 (NNLLGHDQFA…GRIGLFKHNP (121 aa)) is N-terminal hotdog fold. One can recognise a PKS/mFAS DH domain in the interval 937 to 1216 (NNLLGHDQFA…CTSLIRLKKQ (280 aa)). Catalysis depends on H968, which acts as the Proton acceptor; for dehydratase activity. The C-terminal hotdog fold stretch occupies residues 1072 to 1216 (SFTTLTKSEV…CTSLIRLKKQ (145 aa)). The active-site Proton donor; for dehydratase activity is D1132. A disordered region spans residues 1357–1407 (GESEHFSPSNPSSPNDTPRNNSNNCSSKNNAASSDDADDDTNNEETINQLN). A compositionally biased stretch (low complexity) spans 1363 to 1390 (SPSNPSSPNDTPRNNSNNCSSKNNAASS). The 78-residue stretch at 2507–2584 (GDSGSTQAKV…SIIQRISSKS (78 aa)) folds into the Carrier domain. Position 2544 is an O-(pantetheine 4'-phosphoryl)serine (S2544). Residues 2581–2597 (SSKSTSTSTPNPTNTSK) show a composition bias toward low complexity. A disordered region spans residues 2581–2604 (SSKSTSTSTPNPTNTSKQTATKKT).

The cofactor is pantetheine 4'-phosphate.

Probable polyketide synthase. The polypeptide is Probable polyketide synthase 17 (pks17) (Dictyostelium discoideum (Social amoeba)).